We begin with the raw amino-acid sequence, 1134 residues long: Phospholipid-transporting ATPase IH (1134 aa).

The Cytoplasmic portion of the chain corresponds to 1–61 (MDCSLVRTLV…SSKYTFWNFI (61 aa)). A helical transmembrane segment spans residues 62–82 (PKNLFEQFRRVANFYFLIIFL). The Extracellular segment spans residues 83-88 (VQLIID). Residues 89–110 (TPTSPVTSGLPLFFVITVTAIK) form a helical membrane-spanning segment. At 111–296 (QGYEDWLRHK…SAVEKSMNAF (186 aa)) the chain is on the cytoplasmic side. Residues 297–318 (LIVYLCILISKALINTVLKYMW) traverse the membrane as a helical segment. At 319–349 (QSEPFRDEPWYNQKTESERQRNLFLKAFTDF) the chain is on the extracellular side. Residues 350 to 372 (LAFMVLFNYIIPVSMYVTVEMQK) form a helical membrane-spanning segment. At 373–881 (FLGSYFITWD…GHFYYIRISE (509 aa)) the chain is on the cytoplasmic side. Residue Asp-414 is the 4-aspartylphosphate intermediate of the active site. ATP contacts are provided by Asp-414, Lys-415, Thr-416, Glu-511, Phe-553, Lys-576, Arg-607, Thr-687, Gly-688, and Asp-689. Asp-414 contacts Mg(2+). Thr-416 is a binding site for Mg(2+). Phosphoserine is present on Ser-738. ATP-binding residues include Arg-798 and Lys-804. Position 825 (Asp-825) interacts with Mg(2+). ATP contacts are provided by Asn-828 and Asp-829. Asp-829 lines the Mg(2+) pocket. A helical membrane pass occupies residues 882–902 (LVQYFFYKNVCFIFPQFLYQF). Residues 903–914 (FCGFSQQTLYDT) are Extracellular-facing. A helical membrane pass occupies residues 915 to 934 (AYLTLYNISFTSLPILLYSL). Residues 935–964 (MEQHVGIDVLKRDPTLYRDVAKNALLRWRV) are Cytoplasmic-facing. A helical membrane pass occupies residues 965–986 (FIYWTLLGLFDALVFFFGAYFV). Residues 987 to 1000 (FENTTVTSNGQIFG) lie on the Extracellular side of the membrane. Residues 1001-1023 (NWTFGTLVFTVMVFTVTLKLALD) traverse the membrane as a helical segment. Residues 1024-1029 (THYWTW) lie on the Cytoplasmic side of the membrane. Residues 1030–1050 (INHFVIWGSLLFYVVFSLLWG) form a helical membrane-spanning segment. The Extracellular segment spans residues 1051-1068 (GVIWPFLNYQRMYYVFIQ). Residues 1069 to 1093 (MLSSGPAWLAIVLLVTISLLPDVLK) form a helical membrane-spanning segment. Topologically, residues 1094–1134 (KVLCRQLWPTATERVQTKSQCLSVEQSTIFMLSQTSSSLSF) are cytoplasmic.

It belongs to the cation transport ATPase (P-type) (TC 3.A.3) family. Type IV subfamily. Component of a P4-ATPase flippase complex which consists of a catalytic alpha subunit ATP11A and an accessory beta subunit TMEM30A. It depends on Mg(2+) as a cofactor. Proteolytically cleaved by CASP3. In terms of tissue distribution, widely expressed. Expressed in myoblasts.

It is found in the cell membrane. The protein resides in the early endosome. Its subcellular location is the recycling endosome. The protein localises to the endoplasmic reticulum membrane. The catalysed reaction is ATP + H2O + phospholipidSide 1 = ADP + phosphate + phospholipidSide 2.. The enzyme catalyses a 1,2-diacyl-sn-glycero-3-phospho-L-serine(out) + ATP + H2O = a 1,2-diacyl-sn-glycero-3-phospho-L-serine(in) + ADP + phosphate + H(+). It carries out the reaction a 1,2-diacyl-sn-glycero-3-phosphoethanolamine(out) + ATP + H2O = a 1,2-diacyl-sn-glycero-3-phosphoethanolamine(in) + ADP + phosphate + H(+). The flippase activity is inactivated by caspase-mediated cleavage in apoptotic cells, allowing for PS exposure on the cell surface and engulfment of apoptotic cells by macrophages. The ATPase activity is up-regulated by aminophospholipids PS and PE and down-regulated by increasing intracellular Ca2+ levels. Its function is as follows. Catalytic component of a P4-ATPase flippase complex which catalyzes the hydrolysis of ATP coupled to the transport of aminophospholipids, phosphatidylserines (PS) and phosphatidylethanolamines (PE), from the outer to the inner leaflet of the plasma membrane. Does not show flippase activity toward phosphatidylcholine (PC). Contributes to the maintenance of membrane lipid asymmetry with a specific role in morphogenesis of muscle cells. In myoblasts, mediates PS enrichment at the inner leaflet of plasma membrane, triggering PIEZO1-dependent Ca2+ influx and Rho GTPases signal transduction, subsequently leading to the assembly of cortical actomyosin fibers and myotube formation. May be involved in the uptake of farnesyltransferase inhibitor drugs, such as lonafarnib. This is Phospholipid-transporting ATPase IH (ATP11A) from Homo sapiens (Human).